Reading from the N-terminus, the 174-residue chain is Endoribonuclease YbeY (174 aa).

Zn(2+)-binding residues include histidine 129, histidine 133, and histidine 139.

The protein belongs to the endoribonuclease YbeY family. Zn(2+) serves as cofactor.

It is found in the cytoplasm. Functionally, single strand-specific metallo-endoribonuclease involved in late-stage 70S ribosome quality control and in maturation of the 3' terminus of the 16S rRNA. This Lactobacillus helveticus (strain DPC 4571) protein is Endoribonuclease YbeY.